We begin with the raw amino-acid sequence, 456 residues long: Glycosyl hydrolase family 109 protein 2 (456 aa).

The segment at residues 1–33 (MSGFDRRSFLKASMVTAAATALAACASSERATG) is a signal peptide (tat-type signal). NAD(+) is bound by residues 63–64 (ER), aspartate 85, 134–137 (WAWH), 154–155 (EV), and asparagine 183. Substrate contacts are provided by residues tyrosine 212, arginine 231, 243–246 (YPTH), and tyrosine 325. Tyrosine 243 serves as a coordination point for NAD(+).

The protein belongs to the Gfo/Idh/MocA family. Glycosyl hydrolase 109 subfamily. The cofactor is NAD(+). Post-translationally, predicted to be exported by the Tat system. The position of the signal peptide cleavage has not been experimentally proven.

Its function is as follows. Glycosidase. The sequence is that of Glycosyl hydrolase family 109 protein 2 from Shewanella sp. (strain MR-4).